Consider the following 216-residue polypeptide: Probable nicotinate-nucleotide adenylyltransferase (216 aa).

Belongs to the NadD family.

The catalysed reaction is nicotinate beta-D-ribonucleotide + ATP + H(+) = deamido-NAD(+) + diphosphate. It participates in cofactor biosynthesis; NAD(+) biosynthesis; deamido-NAD(+) from nicotinate D-ribonucleotide: step 1/1. Catalyzes the reversible adenylation of nicotinate mononucleotide (NaMN) to nicotinic acid adenine dinucleotide (NaAD). The protein is Probable nicotinate-nucleotide adenylyltransferase of Desulfatibacillum aliphaticivorans.